The primary structure comprises 22 residues: Caerin-3.1 (22 aa).

Lysine 22 is modified (lysine amide).

It belongs to the frog skin active peptide (FSAP) family. Caerin subfamily. As to expression, expressed by the skin dorsal glands.

The protein resides in the secreted. Functionally, antibacterial peptide with narrow spectrum of activity. Inhibits the formation of NO by neuronal nitric oxide synthase. The polypeptide is Caerin-3.1 (Litoria rothii (Roth's tree frog)).